The sequence spans 213 residues: MTTTTSDLTVLRAGTLDYEAAWEEQRRLHESVVTDKHGDAVLLLEHPSVYTAGKRTEPWDRPMDGTPVIDVDRGGKITWHGPGQLVGYPILRLPDPVDVVAYVRRVEQMLIDVCAEFGLVAGRIEGRSGVWVPADDRGPARKVAAIGIRVARGVTLHGFSLNCDCDLTYYDRIVPCGIRDAGVTSLAAELGRPVTVADALPVVERHLPTLVGA.

The region spanning 35–213 is the BPL/LPL catalytic domain; sequence DKHGDAVLLL…ERHLPTLVGA (179 aa). Substrate-binding positions include 73-80, 145-147, and 158-160; these read RGGKITWH, AIG, and GFS. The active-site Acyl-thioester intermediate is the cysteine 176.

Belongs to the LipB family.

The protein localises to the cytoplasm. It carries out the reaction octanoyl-[ACP] + L-lysyl-[protein] = N(6)-octanoyl-L-lysyl-[protein] + holo-[ACP] + H(+). Its pathway is protein modification; protein lipoylation via endogenous pathway; protein N(6)-(lipoyl)lysine from octanoyl-[acyl-carrier-protein]: step 1/2. Catalyzes the transfer of endogenously produced octanoic acid from octanoyl-acyl-carrier-protein onto the lipoyl domains of lipoate-dependent enzymes. Lipoyl-ACP can also act as a substrate although octanoyl-ACP is likely to be the physiological substrate. This is Octanoyltransferase from Salinispora arenicola (strain CNS-205).